A 366-amino-acid polypeptide reads, in one-letter code: Leucine dehydrogenase (366 aa).

The active site involves lysine 80. 180–186 contacts NAD(+); that stretch reads GVGHVAY.

This sequence belongs to the Glu/Leu/Phe/Val dehydrogenases family. In terms of assembly, homooctamer.

The enzyme catalyses L-leucine + NAD(+) + H2O = 4-methyl-2-oxopentanoate + NH4(+) + NADH + H(+). It participates in amino-acid degradation; L-leucine degradation; 4-methyl-2-oxopentanoate from L-leucine (dehydrogenase route): step 1/1. With respect to regulation, inhibited by pyridoxal phosphate. Catalyzes the reversible deamination of L-leucine to 4-methyl-2-oxopentanoate. Exhibits the highest activity with L-leucine as substrate, but can also use other L-amino acids such as L-isoleucine, L-valine and L-2-aminovaleric acid. All of the oxo analogs of the amino acid substrates serve as good substrates for the reverse reaction. The polypeptide is Leucine dehydrogenase (ldh) (Thermoactinomyces intermedius).